The sequence spans 609 residues: UvrABC system protein C (609 aa).

The GIY-YIG domain maps to 13–91 (HEPGVYRMYD…IKLYQPRYNV (79 aa)). The region spanning 201-236 (QQVLDYLIGKMEQASRNLDFEQAARYRDQIQAVRSV) is the UVR domain.

It belongs to the UvrC family. Interacts with UvrB in an incision complex.

It localises to the cytoplasm. Its function is as follows. The UvrABC repair system catalyzes the recognition and processing of DNA lesions. UvrC both incises the 5' and 3' sides of the lesion. The N-terminal half is responsible for the 3' incision and the C-terminal half is responsible for the 5' incision. The sequence is that of UvrABC system protein C from Haemophilus influenzae (strain ATCC 51907 / DSM 11121 / KW20 / Rd).